A 239-amino-acid polypeptide reads, in one-letter code: 1-(5-phosphoribosyl)-5-[(5-phosphoribosylamino)methylideneamino] imidazole-4-carboxamide isomerase (239 aa).

Residue Asp-8 is the Proton acceptor of the active site. Residue Asp-129 is the Proton donor of the active site.

The protein belongs to the HisA/HisF family.

Its subcellular location is the cytoplasm. The enzyme catalyses 1-(5-phospho-beta-D-ribosyl)-5-[(5-phospho-beta-D-ribosylamino)methylideneamino]imidazole-4-carboxamide = 5-[(5-phospho-1-deoxy-D-ribulos-1-ylimino)methylamino]-1-(5-phospho-beta-D-ribosyl)imidazole-4-carboxamide. It functions in the pathway amino-acid biosynthesis; L-histidine biosynthesis; L-histidine from 5-phospho-alpha-D-ribose 1-diphosphate: step 4/9. In Bacillus cereus (strain Q1), this protein is 1-(5-phosphoribosyl)-5-[(5-phosphoribosylamino)methylideneamino] imidazole-4-carboxamide isomerase.